The primary structure comprises 304 residues: tRNA dimethylallyltransferase (304 aa).

2–9 (GPTASGKT) contacts ATP. 4–9 (TASGKT) provides a ligand contact to substrate. Positions 28 to 31 (DSAL) are interaction with substrate tRNA.

Belongs to the IPP transferase family. Monomer. It depends on Mg(2+) as a cofactor.

It carries out the reaction adenosine(37) in tRNA + dimethylallyl diphosphate = N(6)-dimethylallyladenosine(37) in tRNA + diphosphate. Catalyzes the transfer of a dimethylallyl group onto the adenine at position 37 in tRNAs that read codons beginning with uridine, leading to the formation of N6-(dimethylallyl)adenosine (i(6)A). The polypeptide is tRNA dimethylallyltransferase (Blochmanniella pennsylvanica (strain BPEN)).